The sequence spans 129 residues: Methylmalonyl-CoA decarboxylase subunit gamma (129 aa).

Low complexity-rich tracts occupy residues 24 to 39 (APAAAPKAAPAAAPAP) and 49 to 58 (PAAAAAPVPA). The disordered stretch occupies residues 24 to 58 (APAAAPKAAPAAAPAPKAAPAPAPAPAAAAAPVPA). In terms of domain architecture, Biotinyl-binding spans 51–129 (AAAAPVPAGA…STGDDMVVLG (79 aa)). Lys95 is modified (N6-biotinyllysine).

The methylmalonyl-CoA decarboxylase is composed of five subunits: the carboxyltransferase alpha subunit (MmdA), the tunnel beta subunit (MmdB), the biotin-containing gamma subunit (MmdC), and the delta (MmdD) and epsilon (MmdE) subunits. It depends on biotin as a cofactor.

The protein localises to the cell membrane. The enzyme catalyses (S)-methylmalonyl-CoA + Na(+)(in) + H(+)(out) = propanoyl-CoA + Na(+)(out) + CO2. With respect to regulation, completely inhibited by avidin. Its function is as follows. Biotin-containing subunit of the sodium ion pump methylmalonyl-CoA decarboxylase, which converts the chemical energy of a decarboxylation reaction into an electrochemical gradient of Na(+) ions across the cytoplasmic membrane, thereby creating a sodium ion motive force that is used for ATP synthesis. Can also convert malonyl-CoA into acetyl-CoA. This Veillonella parvula (Staphylococcus parvulus) protein is Methylmalonyl-CoA decarboxylase subunit gamma.